Consider the following 1071-residue polypeptide: DNA-directed RNA polymerase subunit beta (1071 aa).

Belongs to the RNA polymerase beta chain family. In terms of assembly, in plastids the minimal PEP RNA polymerase catalytic core is composed of four subunits: alpha, beta, beta', and beta''. When a (nuclear-encoded) sigma factor is associated with the core the holoenzyme is formed, which can initiate transcription.

It is found in the plastid. The protein resides in the chloroplast. The catalysed reaction is RNA(n) + a ribonucleoside 5'-triphosphate = RNA(n+1) + diphosphate. DNA-dependent RNA polymerase catalyzes the transcription of DNA into RNA using the four ribonucleoside triphosphates as substrates. The chain is DNA-directed RNA polymerase subunit beta from Acorus calamus (Sweet flag).